The primary structure comprises 901 residues: HTH-type transcriptional regulator MalT (901 aa).

ATP is bound at residue 39 to 46 (SPAGYGKT). The region spanning 829–894 (ELIHTSPLTQ…AAVQHAQKLL (66 aa)) is the HTH luxR-type domain. The H-T-H motif DNA-binding region spans 853–872 (NEQIAGELEVAATTIKTHIR).

The protein belongs to the MalT family. Monomer in solution. Oligomerizes to an active state in the presence of the positive effectors ATP and maltotriose.

Its activity is regulated as follows. Activated by ATP and maltotriose, which are both required for DNA binding. Its function is as follows. Positively regulates the transcription of the maltose regulon whose gene products are responsible for uptake and catabolism of malto-oligosaccharides. Specifically binds to the promoter region of its target genes, recognizing a short DNA motif called the MalT box. This Shigella sonnei (strain Ss046) protein is HTH-type transcriptional regulator MalT.